The sequence spans 874 residues: Protein translocase subunit SecA (874 aa).

ATP-binding positions include Gln85, 103–107 (GEGKT), and Asp492. Over residues 839-854 (EEGPKKPYRREQKIGR) the composition is skewed to basic and acidic residues. The tract at residues 839-864 (EEGPKKPYRREQKIGRNDPCPCGSGK) is disordered. Zn(2+)-binding residues include Cys858, Cys860, Cys869, and Cys870.

Belongs to the SecA family. In terms of assembly, monomer and homodimer. Part of the essential Sec protein translocation apparatus which comprises SecA, SecYEG and auxiliary proteins SecDF. Other proteins may also be involved. It depends on Zn(2+) as a cofactor.

The protein localises to the cell membrane. It localises to the cytoplasm. It carries out the reaction ATP + H2O + cellular proteinSide 1 = ADP + phosphate + cellular proteinSide 2.. Functionally, part of the Sec protein translocase complex. Interacts with the SecYEG preprotein conducting channel. Has a central role in coupling the hydrolysis of ATP to the transfer of proteins into and across the cell membrane, serving as an ATP-driven molecular motor driving the stepwise translocation of polypeptide chains across the membrane. This chain is Protein translocase subunit SecA, found in Carboxydothermus hydrogenoformans (strain ATCC BAA-161 / DSM 6008 / Z-2901).